A 361-amino-acid chain; its full sequence is Tryptophan--tRNA ligase, mitochondrial (361 aa).

The transit peptide at 1–16 (MAKLPKITSLLPHSRV) directs the protein to the mitochondrion. ATP contacts are provided by residues Gln-21 and 27 to 30 (HIGN). The 'HIGH' region signature appears at 22–30 (PTGIPHIGN). Asp-165 is a binding site for L-tryptophan. Residues 177–179 (GKD), 225–229 (KMSKS), and Lys-228 each bind ATP. The 'KMSKS' region signature appears at 225 to 229 (KMSKS).

The protein belongs to the class-I aminoacyl-tRNA synthetase family. As to quaternary structure, homodimer.

Its subcellular location is the mitochondrion matrix. It catalyses the reaction tRNA(Trp) + L-tryptophan + ATP = L-tryptophyl-tRNA(Trp) + AMP + diphosphate + H(+). The protein is Tryptophan--tRNA ligase, mitochondrial of Schizosaccharomyces pombe (strain 972 / ATCC 24843) (Fission yeast).